Reading from the N-terminus, the 117-residue chain is UPF0102 protein FTF0898c (117 aa).

Belongs to the UPF0102 family.

This Francisella tularensis subsp. tularensis (strain FSC 198) protein is UPF0102 protein FTF0898c.